Reading from the N-terminus, the 445-residue chain is FAS-associated factor 2 (445 aa).

Ala2 is modified (N-acetylalanine). Residues 12–48 (EQTEKLLQFQDLTGIESMDQCRHTLEQHNWNIEAAVQ) enclose the UBA domain. The residue at position 167 (Lys167) is an N6-acetyllysine. Residues 275-350 (SERLEREERN…EEKERKLECL (76 aa)) are a coiled coil. Residues 299 to 361 (ASLRADQEKE…PEPSPDDPES (63 aa)) are disordered. The span at 303–348 (ADQEKERKKREERERKRRKEEEVQQQKLAEERRRRNLQEEKERKLE) shows a compositional bias: basic and acidic residues. The UBX domain maps to 357-439 (DDPESVKIIF…GLSHTEVLFV (83 aa)).

In terms of assembly, identified in a complex that contains SEL1L, OS9, FAF2/UBXD8, UBE2J1/UBC6E and AUP1. Interacts with YOD1. Interacts (via N-terminus) with UBQLN2 (via C-terminus). Interacts with PNPLA2 and UBAC2. Interacts with ZFAND2B; probably through VCP. Interacts with LMBR1L.

The protein localises to the cytoplasm. It is found in the lipid droplet. Its subcellular location is the endoplasmic reticulum. In terms of biological role, plays an important role in endoplasmic reticulum-associated degradation (ERAD) that mediates ubiquitin-dependent degradation of misfolded endoplasmic reticulum proteins. By controlling the steady-state expression of the IGF1R receptor, indirectly regulates the insulin-like growth factor receptor signaling pathway. Involved in inhibition of lipid droplet degradation by binding to phospholipase PNPL2 and inhibiting its activity by promoting dissociation of PNPL2 from its endogenous activator, ABHD5 which inhibits the rate of triacylglycerol hydrolysis. Involved in stress granule disassembly: associates with ubiquitinated G3BP1 in response to heat shock, thereby promoting interaction between ubiquitinated G3BP1 and VCP, followed by G3BP1 extraction from stress granules and stress granule disassembly. This chain is FAS-associated factor 2 (FAF2), found in Bos taurus (Bovine).